A 675-amino-acid polypeptide reads, in one-letter code: MEVIRYPDSPFKLHQPFPPAGDQPTAIAGLLEGLSDGLAYQTLLGVTGSGKTYTMANVIAQSGRPAIIMAHNKTLAAQLYAEMREFFPENAVEYFVSYYDYYQPEAYVPSRDLFIEKDSAINEHIEQMRLSATKNLMTRDDVIIVATVSAIYGIGDPTEYQQMVLSVKEGDTIEQRDIIATLVSMQYERGDLDFKRGSFRVRGDVIDVYPAESSENALRISLFDDEIDRLDMFDPLSGSLHQRVGRYTVFPSSHYVTPRDTVLRACDSIKEELRERIDFFTKENRPVEQQRIEQRTRFDLEMLYEMGFCKGIENYSRHFSGKKEGEPPPTLMDYLPSNAIMFIDESHVTVTQIGGMYKGDASRKQNLVDYGFRLPSARDNRPLKFHEFEKVMPQTVFVSATPAKYEEEHAGQVVEQVVRPTGLVDPQIIIRPVATQVDDLMSEINDRIQKGERVLVTTLTKRMAEQLTDYYSELGIKVRYLHSDIDTVERVEIIRDLRLGLFDVLVGINLLREGLDIPEVSLVAILDADKEGFLRSHRSLIQTIGRAARNVNGVAILYADKITDSMKAAIDETERRREKQIKFNEEHGIVPQQIKKQVKDIIDGVYHEEDSGKGRRQGKNKVKVGEIHNEEDAIKEIAKLEKAMQQAARDLQFEEAAVLRDRIRNIKENLLFGAE.

Residues Glu32–Val417 form the Helicase ATP-binding domain. Gly45–Thr52 lines the ATP pocket. The Beta-hairpin motif lies at Tyr98–Ile121. Residues Gln436 to Ile602 form the Helicase C-terminal domain. The region spanning Ile634–Asn669 is the UVR domain.

The protein belongs to the UvrB family. In terms of assembly, forms a heterotetramer with UvrA during the search for lesions. Interacts with UvrC in an incision complex.

The protein localises to the cytoplasm. Functionally, the UvrABC repair system catalyzes the recognition and processing of DNA lesions. A damage recognition complex composed of 2 UvrA and 2 UvrB subunits scans DNA for abnormalities. Upon binding of the UvrA(2)B(2) complex to a putative damaged site, the DNA wraps around one UvrB monomer. DNA wrap is dependent on ATP binding by UvrB and probably causes local melting of the DNA helix, facilitating insertion of UvrB beta-hairpin between the DNA strands. Then UvrB probes one DNA strand for the presence of a lesion. If a lesion is found the UvrA subunits dissociate and the UvrB-DNA preincision complex is formed. This complex is subsequently bound by UvrC and the second UvrB is released. If no lesion is found, the DNA wraps around the other UvrB subunit that will check the other stand for damage. The chain is UvrABC system protein B from Neisseria meningitidis serogroup A / serotype 4A (strain DSM 15465 / Z2491).